Reading from the N-terminus, the 125-residue chain is Small ribosomal subunit protein uS12 (125 aa).

3-methylthioaspartic acid is present on D89.

The protein belongs to the universal ribosomal protein uS12 family. As to quaternary structure, part of the 30S ribosomal subunit. Contacts proteins S8 and S17. May interact with IF1 in the 30S initiation complex.

With S4 and S5 plays an important role in translational accuracy. Functionally, interacts with and stabilizes bases of the 16S rRNA that are involved in tRNA selection in the A site and with the mRNA backbone. Located at the interface of the 30S and 50S subunits, it traverses the body of the 30S subunit contacting proteins on the other side and probably holding the rRNA structure together. The combined cluster of proteins S8, S12 and S17 appears to hold together the shoulder and platform of the 30S subunit. In Cupriavidus pinatubonensis (strain JMP 134 / LMG 1197) (Cupriavidus necator (strain JMP 134)), this protein is Small ribosomal subunit protein uS12.